Reading from the N-terminus, the 539-residue chain is Chaperonin GroEL (539 aa).

Residues 29–32 (TLGP), 86–90 (DGTTT), G413, 479–481 (DAL), and D495 each bind ATP.

This sequence belongs to the chaperonin (HSP60) family. As to quaternary structure, forms a cylinder of 14 subunits composed of two heptameric rings stacked back-to-back. Interacts with the co-chaperonin GroES.

It localises to the cytoplasm. The enzyme catalyses ATP + H2O + a folded polypeptide = ADP + phosphate + an unfolded polypeptide.. Together with its co-chaperonin GroES, plays an essential role in assisting protein folding. The GroEL-GroES system forms a nano-cage that allows encapsulation of the non-native substrate proteins and provides a physical environment optimized to promote and accelerate protein folding. The protein is Chaperonin GroEL of Thermosipho africanus (strain TCF52B).